We begin with the raw amino-acid sequence, 203 residues long: Outer-membrane lipoprotein carrier protein (203 aa).

Positions 1 to 21 are cleaved as a signal peptide; the sequence is MKKMAIACALLSSVVASSVWA. A disordered region spans residues 178 to 203; sequence QQNGAVDPSKFTFTPPQGVTIDDQRK.

Belongs to the LolA family. Monomer.

The protein localises to the periplasm. Participates in the translocation of lipoproteins from the inner membrane to the outer membrane. Only forms a complex with a lipoprotein if the residue after the N-terminal Cys is not an aspartate (The Asp acts as a targeting signal to indicate that the lipoprotein should stay in the inner membrane). The chain is Outer-membrane lipoprotein carrier protein from Salmonella agona (strain SL483).